Consider the following 1235-residue polypeptide: ATP-dependent helicase/nuclease subunit A (1235 aa).

Residues 4-470 (REYTLSQKQA…IILAENFRSM (467 aa)) form the UvrD-like helicase ATP-binding domain. 25–32 (ASAGSGKT) is an ATP binding site. The 295-residue stretch at 501–795 (QFGAKYYPDE…KLMTIHGSKG (295 aa)) folds into the UvrD-like helicase C-terminal domain.

Belongs to the helicase family. AddA subfamily. Heterodimer of AddA and AddB/RexB. The cofactor is Mg(2+).

It catalyses the reaction Couples ATP hydrolysis with the unwinding of duplex DNA by translocating in the 3'-5' direction.. It carries out the reaction ATP + H2O = ADP + phosphate + H(+). Its function is as follows. The heterodimer acts as both an ATP-dependent DNA helicase and an ATP-dependent, dual-direction single-stranded exonuclease. Recognizes the chi site generating a DNA molecule suitable for the initiation of homologous recombination. The AddA nuclease domain is required for chi fragment generation; this subunit has the helicase and 3' -&gt; 5' nuclease activities. The protein is ATP-dependent helicase/nuclease subunit A of Pediococcus pentosaceus (strain ATCC 25745 / CCUG 21536 / LMG 10740 / 183-1w).